The sequence spans 275 residues: 4-diphosphocytidyl-2-C-methyl-D-erythritol kinase (275 aa).

Lys9 is an active-site residue. Residue 90-100 (PVGGGLGGGSS) participates in ATP binding. Asp132 is an active-site residue.

It belongs to the GHMP kinase family. IspE subfamily.

It catalyses the reaction 4-CDP-2-C-methyl-D-erythritol + ATP = 4-CDP-2-C-methyl-D-erythritol 2-phosphate + ADP + H(+). It participates in isoprenoid biosynthesis; isopentenyl diphosphate biosynthesis via DXP pathway; isopentenyl diphosphate from 1-deoxy-D-xylulose 5-phosphate: step 3/6. Functionally, catalyzes the phosphorylation of the position 2 hydroxy group of 4-diphosphocytidyl-2C-methyl-D-erythritol. In Sulfurihydrogenibium sp. (strain YO3AOP1), this protein is 4-diphosphocytidyl-2-C-methyl-D-erythritol kinase.